A 1122-amino-acid chain; its full sequence is Protein phosphatase 1 regulatory subunit 3A (1122 aa).

The tract at residues 32–58 (TFQPGFSPQPSRRGSDSSEDIYLDTPS) is disordered. Phosphoserine; by GSK3 is present on residues serine 38 and serine 42. At serine 46 the chain carries Phosphoserine; by PKA and ISPK. Serine 49 carries the post-translational modification Phosphoserine. Threonine 56 carries the post-translational modification Phosphothreonine. Residues 62 to 65 (RRVS) carry the PP1-binding motif motif. Position 65 is a phosphoserine; by PKA (serine 65). Positions 122-230 (QLQIQKAILE…NNNGTNYTFI (109 aa)) constitute a CBM21 domain. Disordered stretches follow at residues 332-351 (STAS…NFPN), 395-422 (SSGD…LGDT), 496-516 (CLKE…NGKD), and 640-668 (GINS…SREN). Basic and acidic residues-rich tracts occupy residues 395-405 (SSGDDCTHQPS) and 499-516 (ESTE…NGKD). A compositionally biased stretch (polar residues) spans 640 to 662 (GINSEDQDNSPQHKQSWNVLESQ). Serine 844 bears the Phosphoserine mark. The span at 963-977 (IEKHPYPESKPEEVS) shows a compositional bias: basic and acidic residues. Disordered regions lie at residues 963-983 (IEKH…SGIV) and 1025-1058 (RHEN…PVEE). 2 stretches are compositionally biased toward polar residues: residues 1031 to 1040 (LVSSGQSLYT) and 1048 to 1058 (SSASTSLPVEE). The helical transmembrane segment at 1078 to 1098 (YFLLFLIFLITVYHYDLMIGL) threads the bilayer.

In terms of assembly, interacts with PPP1CC catalytic subunit of PP1, and associates with glycogen. Phosphorylation at Ser-46 by ISPK stimulates the dephosphorylation of glycogen synthase and phosphorylase kinase. As to expression, skeletal muscle and heart.

The protein resides in the membrane. Seems to act as a glycogen-targeting subunit for PP1. PP1 is essential for cell division, and participates in the regulation of glycogen metabolism, muscle contractility and protein synthesis. Plays an important role in glycogen synthesis but is not essential for insulin activation of glycogen synthase. The sequence is that of Protein phosphatase 1 regulatory subunit 3A (PPP1R3A) from Homo sapiens (Human).